Consider the following 227-residue polypeptide: Phosphoribosylformylglycinamidine synthase subunit PurQ (227 aa).

The Glutamine amidotransferase type-1 domain maps to 2 to 226 (KFAVIQFPGS…VKAWKEEQVN (225 aa)). Catalysis depends on Cys-86, which acts as the Nucleophile. Active-site residues include His-195 and Glu-197.

In terms of assembly, part of the FGAM synthase complex composed of 1 PurL, 1 PurQ and 2 PurS subunits.

It localises to the cytoplasm. It catalyses the reaction N(2)-formyl-N(1)-(5-phospho-beta-D-ribosyl)glycinamide + L-glutamine + ATP + H2O = 2-formamido-N(1)-(5-O-phospho-beta-D-ribosyl)acetamidine + L-glutamate + ADP + phosphate + H(+). The catalysed reaction is L-glutamine + H2O = L-glutamate + NH4(+). The protein operates within purine metabolism; IMP biosynthesis via de novo pathway; 5-amino-1-(5-phospho-D-ribosyl)imidazole from N(2)-formyl-N(1)-(5-phospho-D-ribosyl)glycinamide: step 1/2. In terms of biological role, part of the phosphoribosylformylglycinamidine synthase complex involved in the purines biosynthetic pathway. Catalyzes the ATP-dependent conversion of formylglycinamide ribonucleotide (FGAR) and glutamine to yield formylglycinamidine ribonucleotide (FGAM) and glutamate. The FGAM synthase complex is composed of three subunits. PurQ produces an ammonia molecule by converting glutamine to glutamate. PurL transfers the ammonia molecule to FGAR to form FGAM in an ATP-dependent manner. PurS interacts with PurQ and PurL and is thought to assist in the transfer of the ammonia molecule from PurQ to PurL. This chain is Phosphoribosylformylglycinamidine synthase subunit PurQ, found in Listeria monocytogenes serotype 4a (strain HCC23).